The chain runs to 89 residues: Large ribosomal subunit protein uL23c (89 aa).

The protein belongs to the universal ribosomal protein uL23 family. In terms of assembly, part of the 50S ribosomal subunit.

It is found in the plastid. The protein localises to the chloroplast. Binds to 23S rRNA. The protein is Large ribosomal subunit protein uL23c (rpl23) of Zygnema circumcarinatum (Green alga).